The chain runs to 78 residues: Ubiquinol-cytochrome-c reductase complex assembly factor 3 (78 aa).

The Mitochondrial matrix portion of the chain corresponds to 1–5 (MSGMR). Residues 6 to 26 (ILTGSVALGGLTYAIWIIFSP) form a helical membrane-spanning segment. The Mitochondrial intermembrane segment spans residues 27 to 78 (GEERKKEILKSLPEANPVRMEETRKRNAIMLQVLKDAAETNDNIARGFGSQK).

The protein belongs to the UQCC3 family. In terms of assembly, associates with the ubiquinol-cytochrome c reductase complex (mitochondrial respiratory chain complex III or cytochrome b-c1 complex).

It is found in the mitochondrion inner membrane. Required for the assembly of the ubiquinol-cytochrome c reductase complex (mitochondrial respiratory chain complex III or cytochrome b-c1 complex), mediating cytochrome b recruitment and probably stabilization within the complex. Thereby, plays an important role in ATP production by mitochondria. Cardiolipin-binding protein, it may also control the cardiolipin composition of mitochondria membranes and their morphology. This Danio rerio (Zebrafish) protein is Ubiquinol-cytochrome-c reductase complex assembly factor 3.